A 960-amino-acid polypeptide reads, in one-letter code: Chromosome transmission fidelity protein 18 (960 aa).

Disordered stretches follow at residues 56–79 (DLFH…STLD) and 91–113 (DISE…YPNT). Positions 58-69 (FHSSQPVGSPTR) are enriched in polar residues. 423-430 (GLAGAGKT) serves as a coordination point for ATP.

This sequence belongs to the activator 1 small subunits family. CTF18 subfamily. As to quaternary structure, component of the ctf18-RFC complex which consists of ctf18, ctf8, dcc1, rfc2, rfc3, rfc4 and rfc5.

The protein localises to the nucleus. In terms of biological role, essential for the fidelity of chromosome transmission. Required for the DNA replication block checkpoint. Replication factor C (RFC) complex has an essential but redundant activity in sister chromatid cohesion establishment. Acts as a PCNA loader, loading PCNA onto primed templates. An RFC-like complex (ctf18-RFC) is formed where ctf18 replaces rfc1 in the RFC complex along with the association of dcc1 and ctf8. This complex is required for efficient establishment of chromosome cohesion during S-phase. This chain is Chromosome transmission fidelity protein 18 (ctf18), found in Schizosaccharomyces pombe (strain 972 / ATCC 24843) (Fission yeast).